An 85-amino-acid polypeptide reads, in one-letter code: METVVGLTAIAVALLIGLGALGTAIGFGLLGGKFLEGAARQPEMVPMLQVKMFIVAGLLDAVTMIGVGIALFFTFANPFVGQIAG.

A run of 2 helical transmembrane segments spans residues 10-30 (IAVA…FGLL) and 53-73 (FIVA…ALFF).

The protein belongs to the ATPase C chain family. In terms of assembly, F-type ATPases have 2 components, F(1) - the catalytic core - and F(0) - the membrane proton channel. F(1) has five subunits: alpha(3), beta(3), gamma(1), delta(1), epsilon(1). F(0) has three main subunits: a(1), b(2) and c(10-14). The alpha and beta chains form an alternating ring which encloses part of the gamma chain. F(1) is attached to F(0) by a central stalk formed by the gamma and epsilon chains, while a peripheral stalk is formed by the delta and b chains.

It is found in the cell inner membrane. Its function is as follows. F(1)F(0) ATP synthase produces ATP from ADP in the presence of a proton or sodium gradient. F-type ATPases consist of two structural domains, F(1) containing the extramembraneous catalytic core and F(0) containing the membrane proton channel, linked together by a central stalk and a peripheral stalk. During catalysis, ATP synthesis in the catalytic domain of F(1) is coupled via a rotary mechanism of the central stalk subunits to proton translocation. Functionally, key component of the F(0) channel; it plays a direct role in translocation across the membrane. A homomeric c-ring of between 10-14 subunits forms the central stalk rotor element with the F(1) delta and epsilon subunits. In Pseudomonas aeruginosa (strain LESB58), this protein is ATP synthase subunit c.